Consider the following 512-residue polypeptide: Pentatricopeptide repeat-containing protein At1g64583, mitochondrial (512 aa).

The N-terminal 34 residues, 1–34 (MRRLIVTGIATSTAKGFRRVVNPNLLGGGAAARA), are a transit peptide targeting the mitochondrion. PPR repeat units lie at residues 70-104 (SIVD…GISH), 105-139 (DLYS…GYEP), 140-174 (SIVT…GYEP), 175-209 (NVVV…GLGA), 210-244 (DVVT…SINP), 245-279 (DVVT…SVDP), 280-314 (NNVT…GCFP), 315-349 (NVVT…GFNA), 350-384 (DIFT…RVTP), 385-415 (DIIT…MRES), 420-454 (GIVA…GVKP), and 455-489 (DART…GIIC).

It belongs to the PPR family. P subfamily.

The protein localises to the mitochondrion. The polypeptide is Pentatricopeptide repeat-containing protein At1g64583, mitochondrial (Arabidopsis thaliana (Mouse-ear cress)).